A 134-amino-acid chain; its full sequence is MAKKWLNKVKWDDNGLVPVIVQEVGSNDVLMFAFMNRDALQRTVELGEAVFWSRSRKRLWHKGEESGHVQKVHEIRLDCDEDVVLLKVTQIDNIACHTGRHSCFFQKFEGDVEVGDWQTVEPVLKDPAQIYTKP.

D78 lines the Mg(2+) pocket. C79 serves as a coordination point for Zn(2+). Residues D80 and D82 each coordinate Mg(2+). C96 and C103 together coordinate Zn(2+).

The protein belongs to the PRA-CH family. As to quaternary structure, homodimer. It depends on Mg(2+) as a cofactor. Requires Zn(2+) as cofactor.

The protein localises to the cytoplasm. The enzyme catalyses 1-(5-phospho-beta-D-ribosyl)-5'-AMP + H2O = 1-(5-phospho-beta-D-ribosyl)-5-[(5-phospho-beta-D-ribosylamino)methylideneamino]imidazole-4-carboxamide. It functions in the pathway amino-acid biosynthesis; L-histidine biosynthesis; L-histidine from 5-phospho-alpha-D-ribose 1-diphosphate: step 3/9. Functionally, catalyzes the hydrolysis of the adenine ring of phosphoribosyl-AMP. The protein is Phosphoribosyl-AMP cyclohydrolase of Cupriavidus necator (strain ATCC 17699 / DSM 428 / KCTC 22496 / NCIMB 10442 / H16 / Stanier 337) (Ralstonia eutropha).